Here is a 530-residue protein sequence, read N- to C-terminus: RNA-binding protein 39 (530 aa).

The segment at 1–146 (MADDIDIEAM…PVREPIDNLT (146 aa)) is disordered. The residue at position 2 (A2) is an N-acetylalanine. Residues 14–32 (PYKKDENKLSSANGHEERS) are compositionally biased toward basic and acidic residues. Basic residues-rich tracts occupy residues 33 to 56 (KKRK…KERK) and 64 to 95 (KKSK…RGRY). Y95 bears the Phosphotyrosine mark. 2 positions are modified to phosphoserine: S97 and S100. A Glycyl lysine isopeptide (Lys-Gly) (interchain with G-Cter in SUMO2) cross-link involves residue K111. The residue at position 117 (S117) is a Phosphoserine. K119 participates in a covalent cross-link: Glycyl lysine isopeptide (Lys-Gly) (interchain with G-Cter in SUMO2). Over residues 119 to 130 (KLSRRRSRSKSP) the composition is skewed to basic residues. S121 and S136 each carry phosphoserine. Over residues 131–146 (FRKDKSPVREPIDNLT) the composition is skewed to basic and acidic residues. The residue at position 146 (T146) is a Phosphothreonine. The region spanning 153–230 (RTVFCMQLAA…VPIIVQASQA (78 aa)) is the RRM 1 domain. Residue K244 forms a Glycyl lysine isopeptide (Lys-Gly) (interchain with G-Cter in SUMO2) linkage. In terms of domain architecture, RRM 2 spans 250 to 328 (MRLYVGSLHF…RPMKVGHVTE (79 aa)). Residues 291–355 (KGYGFITFSD…RTGIDLGTTG (65 aa)) are activating domain. Residues 291–406 (KGYGFITFSD…IDLQTRLSQQ (116 aa)) form an interaction with JUN region. 3 positions are modified to phosphoserine: S334, S337, and S341. The interaction with ESR1 and ESR2 stretch occupies residues 355 to 406 (GRLQLMARLAEGTGLQIPPAAQQALQMSGSLAFGAVAEFSFVIDLQTRLSQQ). The tract at residues 406 to 530 (QTEASALAAA…ATQLLVPSRR (125 aa)) is interaction with NCOA6. In terms of domain architecture, RRM 3 spans 445 to 508 (EIKDDVIEEC…KMITAAYVPL (64 aa)).

This sequence belongs to the splicing factor SR family. In terms of assembly, interacts with NCOA6 and JUN. Interacts with ESR1 and ESR2, in the presence of estradiol (E2). Interacts with RSRC1 (via Arg/Ser-rich domain). Interacts with SF3B1. Interacts with ZNF106 (via N-terminus). Post-translationally, aryl sulfonamide anticancer drugs, such as indisulam (E7070) or E7820, promote ubiquitination and subsequent degradation by the DCX(DCAF15) complex. RBM39 degradation results in splicing defects and death in cancer cell lines. Aryl sulfonamide anticancer drugs change the substrate specificity of DCAF15 by acting as a molecular glue that promotes binding between DCAF15 and weak affinity interactor RBM39. As to expression, widely expressed. Highly expressed in pancreas, skeletal muscle, lung and brain. Expressed at intermediate level in kidney, liver and heart.

It is found in the nucleus speckle. In terms of biological role, RNA-binding protein that acts as a pre-mRNA splicing factor. Acts by promoting exon inclusion via regulation of exon cassette splicing. Also acts as a transcriptional coactivator for steroid nuclear receptors ESR1/ER-alpha and ESR2/ER-beta, and JUN/AP-1, independently of the pre-mRNA splicing factor activity. This chain is RNA-binding protein 39, found in Homo sapiens (Human).